The following is a 359-amino-acid chain: Src kinase-associated phosphoprotein 2 (359 aa).

Phosphoserine occurs at positions 5, 6, and 9. Positions 14 to 64 are homodimerization; it reads PEEIRNLLADVETFVADILKGENLSKKAKEKRESLIKKIKDVKSIYLQEFQ. Residues 66 to 88 are disordered; the sequence is KGDAEDGEEYDDPFAGPPDTISL. Tyrosine 75 carries the phosphotyrosine modification. A phosphoserine mark is found at serine 87 and serine 90. The region spanning 116–219 is the PH domain; that stretch reads FVLKAGYLEK…WVQQLKFVLQ (104 aa). A phosphotyrosine mark is found at tyrosine 151 and tyrosine 197. Serine 223 is subject to Phosphoserine. Residue tyrosine 261 is modified to Phosphotyrosine. The tract at residues 264–293 is disordered; that stretch reads LPEEEEDSAPVKVEEQRKMSQDSVHHTSGD. A compositionally biased stretch (basic and acidic residues) spans 275 to 293; sequence KVEEQRKMSQDSVHHTSGD. 2 positions are modified to phosphoserine: serine 283 and serine 286. The SH3 domain maps to 297–358; sequence DYANFYQGLW…PKAYIMEMYD (62 aa).

It belongs to the SKAP family. As to quaternary structure, homodimer. Interacts with PTPNS1. Part of a complex consisting of SKAP2, FYB1 and PTPNS1. Part of a complex consisting of SKAP2, FYB1 and LILRB3. May interact with actin. Interacts with FYB1, which is required for SKAP2 protein stability. Interacts with LAT, GRB2, PTK2B and PRAM1. May interact with FYN, HCK and LYN. Interacts with FASLG. Phosphorylated in resting platelets. Phosphorylated by FYN on Tyr-261 upon T-cell activation. Dephosphorylated on Tyr-75 by PTPN22. Ubiquitously expressed. Present in platelets (at protein level).

It localises to the cytoplasm. May be involved in B-cell and macrophage adhesion processes. In B-cells, may act by coupling the B-cell receptor (BCR) to integrin activation. May play a role in src signaling pathway. This chain is Src kinase-associated phosphoprotein 2 (SKAP2), found in Homo sapiens (Human).